We begin with the raw amino-acid sequence, 389 residues long: 8-amino-7-oxononanoate synthase 2 (389 aa).

Arginine 21 provides a ligand contact to substrate. A pyridoxal 5'-phosphate-binding site is contributed by 108-109 (GY). Position 133 (histidine 133) interacts with substrate. Pyridoxal 5'-phosphate is bound by residues serine 180, 205–208 (DDAH), and 234–237 (TLSK). An N6-(pyridoxal phosphate)lysine modification is found at lysine 237. Residue threonine 351 participates in substrate binding.

This sequence belongs to the class-II pyridoxal-phosphate-dependent aminotransferase family. BioF subfamily. As to quaternary structure, homodimer. Pyridoxal 5'-phosphate is required as a cofactor.

The enzyme catalyses 6-carboxyhexanoyl-[ACP] + L-alanine + H(+) = (8S)-8-amino-7-oxononanoate + holo-[ACP] + CO2. It functions in the pathway cofactor biosynthesis; biotin biosynthesis. Its function is as follows. Catalyzes the decarboxylative condensation of pimeloyl-[acyl-carrier protein] and L-alanine to produce 8-amino-7-oxononanoate (AON), [acyl-carrier protein], and carbon dioxide. The polypeptide is 8-amino-7-oxononanoate synthase 2 (bioF) (Bacillus subtilis (strain 168)).